A 523-amino-acid chain; its full sequence is Ribosomal protein uS12 methylthiotransferase RimO (523 aa).

The region spanning 7-134 (RRVALITLGC…IATHLAAVLA (128 aa)) is the MTTase N-terminal domain. [4Fe-4S] cluster-binding residues include Cys16, Cys52, Cys97, Cys192, Cys196, and Cys199. The region spanning 178–409 (LTAGPVAVLK…DLVEQLTAAR (232 aa)) is the Radical SAM core domain. The 82-residue stretch at 411–492 (DARIGSRVQV…GVDLIAEFIA (82 aa)) folds into the TRAM domain.

The protein belongs to the methylthiotransferase family. RimO subfamily. [4Fe-4S] cluster serves as cofactor.

Its subcellular location is the cytoplasm. It catalyses the reaction L-aspartate(89)-[ribosomal protein uS12]-hydrogen + (sulfur carrier)-SH + AH2 + 2 S-adenosyl-L-methionine = 3-methylsulfanyl-L-aspartate(89)-[ribosomal protein uS12]-hydrogen + (sulfur carrier)-H + 5'-deoxyadenosine + L-methionine + A + S-adenosyl-L-homocysteine + 2 H(+). Functionally, catalyzes the methylthiolation of an aspartic acid residue of ribosomal protein uS12. This chain is Ribosomal protein uS12 methylthiotransferase RimO, found in Frankia casuarinae (strain DSM 45818 / CECT 9043 / HFP020203 / CcI3).